Consider the following 966-residue polypeptide: Phosphoenolpyruvate carboxylase (966 aa).

Residue serine 10 is modified to Phosphoserine. Active-site residues include histidine 171 and lysine 601.

Belongs to the PEPCase type 1 family. In terms of assembly, homotetramer. It depends on Mg(2+) as a cofactor.

The protein localises to the cytoplasm. The catalysed reaction is oxaloacetate + phosphate = phosphoenolpyruvate + hydrogencarbonate. With respect to regulation, by light-reversible phosphorylation. Functionally, through the carboxylation of phosphoenolpyruvate (PEP) it forms oxaloacetate, a four-carbon dicarboxylic acid source for the tricarboxylic acid cycle. This Medicago sativa (Alfalfa) protein is Phosphoenolpyruvate carboxylase (PEPC).